We begin with the raw amino-acid sequence, 434 residues long: ATP-dependent protease ATPase subunit HslU (434 aa).

ATP contacts are provided by residues Ile18, 60-65 (GVGKTE), Asp247, Glu312, and Arg384.

This sequence belongs to the ClpX chaperone family. HslU subfamily. A double ring-shaped homohexamer of HslV is capped on each side by a ring-shaped HslU homohexamer. The assembly of the HslU/HslV complex is dependent on binding of ATP.

The protein resides in the cytoplasm. Its function is as follows. ATPase subunit of a proteasome-like degradation complex; this subunit has chaperone activity. The binding of ATP and its subsequent hydrolysis by HslU are essential for unfolding of protein substrates subsequently hydrolyzed by HslV. HslU recognizes the N-terminal part of its protein substrates and unfolds these before they are guided to HslV for hydrolysis. In Brucella melitensis biotype 2 (strain ATCC 23457), this protein is ATP-dependent protease ATPase subunit HslU.